The following is an 804-amino-acid chain: Leucine--tRNA ligase (804 aa).

Residues 40–51 (PYPSGAGLHVGH) carry the 'HIGH' region motif. Residues 576 to 580 (KMSKS) carry the 'KMSKS' region motif. Residue Lys-579 coordinates ATP.

This sequence belongs to the class-I aminoacyl-tRNA synthetase family.

Its subcellular location is the cytoplasm. It catalyses the reaction tRNA(Leu) + L-leucine + ATP = L-leucyl-tRNA(Leu) + AMP + diphosphate. The chain is Leucine--tRNA ligase from Staphylococcus saprophyticus subsp. saprophyticus (strain ATCC 15305 / DSM 20229 / NCIMB 8711 / NCTC 7292 / S-41).